The primary structure comprises 476 residues: Ribulose bisphosphate carboxylase/oxygenase activase 1, chloroplastic (476 aa).

The transit peptide at 1–56 (MAAAYSTVGAVNRAPLSLNGSGARASLVPSTAFFGSSLKKSAAKFPKASSGNFKIV) directs the protein to the chloroplast. ATP is bound at residue 165-172 (GGKGQGKS).

The protein belongs to the RuBisCO activase family.

The protein localises to the plastid. It is found in the chloroplast stroma. Functionally, activation of RuBisCO (ribulose-1,5-bisphosphate carboxylase/oxygenase; EC 4.1.1.39) involves the ATP-dependent carboxylation of the epsilon-amino group of lysine leading to a carbamate structure. This Larrea tridentata (Creosote bush) protein is Ribulose bisphosphate carboxylase/oxygenase activase 1, chloroplastic (RCA1).